The sequence spans 368 residues: Probable pectate lyase 4 (368 aa).

The N-terminal stretch at 1-25 (MASLVVIVSLLLAAFASPLLETAHS) is a signal peptide. The N-linked (GlcNAc...) asparagine glycan is linked to Asn-27. Ca(2+) is bound by residues Asp-167, Asp-191, and Asp-195. Residue Arg-247 is part of the active site.

This sequence belongs to the polysaccharide lyase 1 family. Ca(2+) is required as a cofactor.

The catalysed reaction is Eliminative cleavage of (1-&gt;4)-alpha-D-galacturonan to give oligosaccharides with 4-deoxy-alpha-D-galact-4-enuronosyl groups at their non-reducing ends.. It participates in glycan metabolism; pectin degradation; 2-dehydro-3-deoxy-D-gluconate from pectin: step 2/5. This Arabidopsis thaliana (Mouse-ear cress) protein is Probable pectate lyase 4.